The primary structure comprises 1009 residues: Membrane alanyl aminopeptidase (1009 aa).

The signal sequence occupies residues 1–15 (MAAIKLLVLSLACAC). A propeptide spans 16 to 52 (VIAHSPIPPASRTIFLDERLEGGAFENIDAFENIELS) (activation peptide). Residue 338–342 (GAMEN) participates in substrate binding. Histidine 374 is a binding site for Zn(2+). The active-site Proton acceptor is glutamate 375. The Zn(2+) site is built by histidine 378 and glutamate 397. A glycan (N-linked (GlcNAc...) asparagine) is linked at asparagine 906. The disordered stretch occupies residues 955–980 (PSTSTTSTTAAPTTVTQPTITEPSTP). Aspartate 987 carries GPI-anchor amidated aspartate lipidation. Residues 988 to 1009 (SAMTSFASLFIISLGAILHLIL) constitute a propeptide, removed in mature form.

The protein belongs to the peptidase M1 family. Zn(2+) is required as a cofactor.

The protein localises to the cell membrane. In terms of biological role, binds to the B.thuringiensis toxin, CryIA(C). The polypeptide is Membrane alanyl aminopeptidase (Heliothis virescens (Tobacco budworm moth)).